The following is a 463-amino-acid chain: RuvB-like 2 (463 aa).

Ala-2 is modified (N-acetylalanine). Residue Lys-9 forms a Glycyl lysine isopeptide (Lys-Gly) (interchain with G-Cter in SUMO2) linkage. 77–84 (GQPGTGKT) lines the ATP pocket. Phosphoserine is present on Ser-437. Residues Lys-444 and Lys-456 each participate in a glycyl lysine isopeptide (Lys-Gly) (interchain with G-Cter in SUMO2) cross-link.

It belongs to the RuvB family. In terms of assembly, forms homohexameric rings. Can form a dodecamer with RUVBL1 made of two stacked hexameric rings; however, even though RUVBL1 and RUVBL2 are present in equimolar ratio, the oligomeric status of each hexamer is not known. Oligomerization may regulate binding to nucleic acids and conversely, binding to nucleic acids may affect the dodecameric assembly. Interaction of the complex with DHX34 results in conformational changes of the N-terminus of the RUVBL2 subunits, resulting in loss of nucleotide binding ability and ATP hydrolysis of the complex. Interacts with the transcriptional activation domain of MYC. Interacts with ATF2. Component of the RNA polymerase II holoenzyme complex. May also act to bridge the LEF1/TCF1-CTNNB1 complex and TBP. Component of the NuA4 histone acetyltransferase complex which contains the catalytic subunit KAT5/TIP60 and the subunits EP400, TRRAP/PAF400, BRD8/SMAP, EPC1, DMAP1/DNMAP1, RUVBL1/TIP49, RUVBL2, ING3, actin, ACTL6A/BAF53A, MORF4L1/MRG15, MORF4L2/MRGX, MRGBP, YEATS4/GAS41, VPS72/YL1 and MEAF6. The NuA4 complex interacts with MYC and the adenovirus E1A protein. RUVBL2 interacts with EP400. Component of a NuA4-related complex which contains EP400, TRRAP/PAF400, SRCAP, BRD8/SMAP, EPC1, DMAP1/DNMAP1, RUVBL1/TIP49, RUVBL2, actin, ACTL6A/BAF53A, VPS72 and YEATS4/GAS41. Interacts with NPAT. Component of the chromatin-remodeling INO80 complex; specifically part of a complex module associated with the helicase ATP-binding and the helicase C-terminal domain of INO80. Component of some MLL1/MLL complex, at least composed of the core components KMT2A/MLL1, ASH2L, HCFC1/HCF1, WDR5 and RBBP5, as well as the facultative components BACC1, CHD8, E2F6, HSP70, INO80C, KANSL1, LAS1L, MAX, MCRS1, MGA, MYST1/MOF, PELP1, PHF20, PRP31, RING2, RUVB1/TIP49A, RUVB2/TIP49B, SENP3, TAF1, TAF4, TAF6, TAF7, TAF9 and TEX10. Interacts with IGHMBP2. Interacts with TELO2. Interacts with HINT1. Component of a SWR1-like complex. Component of the R2TP complex composed at least of RUVBL1, RUVBL2, RPAP3 and PIHD1. Component of the PAQosome complex which is responsible for the biogenesis of several protein complexes and which consists of R2TP complex members RUVBL1, RUVBL2, RPAP3 and PIH1D1, URI complex members PFDN2, PFDN6, PDRG1, UXT and URI1 as well as ASDURF, POLR2E and DNAAF10/WDR92. Interacts with ITFG1. Interacts with ZMYND10. Interacts with WAC; WAC positively regulates MTOR activity by promoting the assembly of the TTT complex composed of TELO2, TTI1 and TTI2 and the RUVBL complex composed of RUVBL1 and RUVBL2 into the TTT-RUVBL complex which leads to the dimerization of the mTORC1 complex and its subsequent activation. Forms a complex with APPL1 and APPL2. Interacts with ZNHIT2 (via HIT-type zinc finger) in the presence of ATP or ADP; shows a stronger interaction in the presence of ADP. The RUVBL1/RUVBL2 complex interacts with ZNHIT1 (via HIT-type zinc finger), ZNHIT3 (via HIT-type zinc finger), ZNHIT6 (via HIT-type zinc finger) and DDX59/ZNHIT5 (via HIT-type zinc finger) in the presence of ADP. Interacts with NOPCHAP1; the interaction is direct and disrupted upon ATP binding. Interacts with SMG1.

The protein localises to the nucleus matrix. It is found in the nucleus. It localises to the nucleoplasm. Its subcellular location is the cytoplasm. The protein resides in the membrane. The protein localises to the dynein axonemal particle. It catalyses the reaction ATP + H2O = ADP + phosphate + H(+). In terms of biological role, possesses single-stranded DNA-stimulated ATPase and ATP-dependent DNA helicase (5' to 3') activity; hexamerization is thought to be critical for ATP hydrolysis and adjacent subunits in the ring-like structure contribute to the ATPase activity. Component of the NuA4 histone acetyltransferase complex which is involved in transcriptional activation of select genes principally by acetylation of nucleosomal histones H4 and H2A. This modification may both alter nucleosome-DNA interactions and promote interaction of the modified histones with other proteins which positively regulate transcription. This complex may be required for the activation of transcriptional programs associated with oncogene and proto-oncogene mediated growth induction, tumor suppressor mediated growth arrest and replicative senescence, apoptosis, and DNA repair. The NuA4 complex ATPase and helicase activities seem to be, at least in part, contributed by the association of RUVBL1 and RUVBL2 with EP400. NuA4 may also play a direct role in DNA repair when recruited to sites of DNA damage. Component of a SWR1-like complex that specifically mediates the removal of histone H2A.Z/H2AZ1 from the nucleosome. Proposed core component of the chromatin remodeling INO80 complex which exhibits DNA- and nucleosome-activated ATPase activity and catalyzes ATP-dependent nucleosome sliding. Plays an essential role in oncogenic transformation by MYC and also modulates transcriptional activation by the LEF1/TCF1-CTNNB1 complex. May also inhibit the transcriptional activity of ATF2. Involved in the endoplasmic reticulum (ER)-associated degradation (ERAD) pathway where it negatively regulates expression of ER stress response genes. May play a role in regulating the composition of the U5 snRNP complex. This is RuvB-like 2 (Ruvbl2) from Mus musculus (Mouse).